We begin with the raw amino-acid sequence, 549 residues long: Protein EPD1 (549 aa).

The first 22 residues, 1-22 (MLLNSLFPSILAAATFVTSAAA), serve as a signal peptide directing secretion. N-linked (GlcNAc...) asparagine glycans are attached at residues N40 and N59. C72 and C101 are joined by a disulfide. N-linked (GlcNAc...) asparagine glycans are attached at residues N147 and N163. 5 cysteine pairs are disulfide-bonded: C214/C347, C232/C263, C369/C420, C378/C444, and C397/C402. Over residues 336 to 356 (AESASGVSRTSCPTNTDNWEA) the composition is skewed to polar residues. Positions 336–361 (AESASGVSRTSCPTNTDNWEASTELP) are disordered. N383 carries an N-linked (GlcNAc...) asparagine glycan. 2 N-linked (GlcNAc...) asparagine glycosylation sites follow: N408 and N438. The segment at 479–519 (SVRTDTSEATTDSGSGSSNSGSASSSKSTSSSTSSGSSGSK) is disordered. Over residues 487–519 (ATTDSGSGSSNSGSASSSKSTSSSTSSGSSGSK) the composition is skewed to low complexity.

Belongs to the glycosyl hydrolase 72 family.

The protein resides in the cell membrane. This Candida maltosa (Yeast) protein is Protein EPD1 (EPD1).